Here is a 132-residue protein sequence, read N- to C-terminus: MELEYPDDLRYLDSHEYIRLDGEIATIGLSAHAIDELGDIVFLELPEEGDAIVVGETFGSIESVKAVEDLYAPISGTVIDRNEALIQSPEMVSEDPYEEGWFIKVRVDNLDDEMLAETMTAEEYRLQVAGEE.

One can recognise a Lipoyl-binding domain in the interval 24–106 (IATIGLSAHA…YEEGWFIKVR (83 aa)). K65 is modified (N6-lipoyllysine).

It belongs to the GcvH family. The glycine cleavage system is composed of four proteins: P, T, L and H. The cofactor is (R)-lipoate.

Functionally, the glycine cleavage system catalyzes the degradation of glycine. The H protein shuttles the methylamine group of glycine from the P protein to the T protein. The protein is Glycine cleavage system H protein of Picosynechococcus sp. (strain ATCC 27264 / PCC 7002 / PR-6) (Agmenellum quadruplicatum).